Reading from the N-terminus, the 347-residue chain is Phosphoribosylformylglycinamidine cyclo-ligase (347 aa).

The protein belongs to the AIR synthase family.

The protein resides in the cytoplasm. The enzyme catalyses 2-formamido-N(1)-(5-O-phospho-beta-D-ribosyl)acetamidine + ATP = 5-amino-1-(5-phospho-beta-D-ribosyl)imidazole + ADP + phosphate + H(+). It participates in purine metabolism; IMP biosynthesis via de novo pathway; 5-amino-1-(5-phospho-D-ribosyl)imidazole from N(2)-formyl-N(1)-(5-phospho-D-ribosyl)glycinamide: step 2/2. This is Phosphoribosylformylglycinamidine cyclo-ligase from Bacillus cytotoxicus (strain DSM 22905 / CIP 110041 / 391-98 / NVH 391-98).